The sequence spans 233 residues: Octanoyltransferase (233 aa).

The BPL/LPL catalytic domain maps to asparagine 32–leucine 213. Substrate contacts are provided by residues arginine 77–histidine 84, alanine 144–glycine 146, and glycine 157–alanine 159. Catalysis depends on cysteine 175, which acts as the Acyl-thioester intermediate.

The protein belongs to the LipB family.

Its subcellular location is the cytoplasm. The enzyme catalyses octanoyl-[ACP] + L-lysyl-[protein] = N(6)-octanoyl-L-lysyl-[protein] + holo-[ACP] + H(+). It functions in the pathway protein modification; protein lipoylation via endogenous pathway; protein N(6)-(lipoyl)lysine from octanoyl-[acyl-carrier-protein]: step 1/2. Catalyzes the transfer of endogenously produced octanoic acid from octanoyl-acyl-carrier-protein onto the lipoyl domains of lipoate-dependent enzymes. Lipoyl-ACP can also act as a substrate although octanoyl-ACP is likely to be the physiological substrate. The protein is Octanoyltransferase of Clostridium kluyveri (strain ATCC 8527 / DSM 555 / NBRC 12016 / NCIMB 10680 / K1).